Consider the following 178-residue polypeptide: Zinc finger protein ZAT11 (178 aa).

2 C2H2-type zinc fingers span residues 47-69 (FECK…RASH) and 94-116 (HKCS…MRRH).

Expressed in leaves.

The protein localises to the nucleus. Functionally, probable transcription factor that may be involved in stress responses. The sequence is that of Zinc finger protein ZAT11 (ZAT11) from Arabidopsis thaliana (Mouse-ear cress).